A 455-amino-acid chain; its full sequence is Bifunctional protein GlmU (455 aa).

Residues 1–226 (MSLDIVILAA…AMEVQGANDR (226 aa)) form a pyrophosphorylase region. Residues 8 to 11 (LAAG), Lys-22, Gln-73, 78 to 79 (GT), 99 to 101 (YGD), Gly-136, Glu-151, Asn-166, and Asn-224 each bind UDP-N-acetyl-alpha-D-glucosamine. Mg(2+) is bound at residue Asp-101. A Mg(2+)-binding site is contributed by Asn-224. Residues 227–247 (KQLSELERHYQLREARRLMAG) are linker. An N-acetyltransferase region spans residues 248–455 (GVTLRDPARF…WKRPVKIRKD (208 aa)). Residues Arg-330 and Lys-348 each coordinate UDP-N-acetyl-alpha-D-glucosamine. Catalysis depends on His-360, which acts as the Proton acceptor. UDP-N-acetyl-alpha-D-glucosamine contacts are provided by Tyr-363 and Asn-374. Acetyl-CoA-binding positions include Ala-377, 383 to 384 (NY), Ser-402, Ala-420, and Arg-437.

This sequence in the N-terminal section; belongs to the N-acetylglucosamine-1-phosphate uridyltransferase family. The protein in the C-terminal section; belongs to the transferase hexapeptide repeat family. In terms of assembly, homotrimer. Mg(2+) is required as a cofactor.

It is found in the cytoplasm. It carries out the reaction alpha-D-glucosamine 1-phosphate + acetyl-CoA = N-acetyl-alpha-D-glucosamine 1-phosphate + CoA + H(+). It catalyses the reaction N-acetyl-alpha-D-glucosamine 1-phosphate + UTP + H(+) = UDP-N-acetyl-alpha-D-glucosamine + diphosphate. Its pathway is nucleotide-sugar biosynthesis; UDP-N-acetyl-alpha-D-glucosamine biosynthesis; N-acetyl-alpha-D-glucosamine 1-phosphate from alpha-D-glucosamine 6-phosphate (route II): step 2/2. It participates in nucleotide-sugar biosynthesis; UDP-N-acetyl-alpha-D-glucosamine biosynthesis; UDP-N-acetyl-alpha-D-glucosamine from N-acetyl-alpha-D-glucosamine 1-phosphate: step 1/1. It functions in the pathway bacterial outer membrane biogenesis; LPS lipid A biosynthesis. Functionally, catalyzes the last two sequential reactions in the de novo biosynthetic pathway for UDP-N-acetylglucosamine (UDP-GlcNAc). The C-terminal domain catalyzes the transfer of acetyl group from acetyl coenzyme A to glucosamine-1-phosphate (GlcN-1-P) to produce N-acetylglucosamine-1-phosphate (GlcNAc-1-P), which is converted into UDP-GlcNAc by the transfer of uridine 5-monophosphate (from uridine 5-triphosphate), a reaction catalyzed by the N-terminal domain. The protein is Bifunctional protein GlmU of Pseudomonas savastanoi pv. phaseolicola (strain 1448A / Race 6) (Pseudomonas syringae pv. phaseolicola (strain 1448A / Race 6)).